Here is a 332-residue protein sequence, read N- to C-terminus: Ribosomal RNA small subunit methyltransferase C (332 aa).

It belongs to the methyltransferase superfamily. RsmC family. As to quaternary structure, monomer.

It localises to the cytoplasm. It catalyses the reaction guanosine(1207) in 16S rRNA + S-adenosyl-L-methionine = N(2)-methylguanosine(1207) in 16S rRNA + S-adenosyl-L-homocysteine + H(+). Its function is as follows. Specifically methylates the guanine in position 1207 of 16S rRNA in the 30S particle. This is Ribosomal RNA small subunit methyltransferase C from Pseudomonas entomophila (strain L48).